The primary structure comprises 244 residues: MKERRASQKLSSKSIMDPNQNVKCKIVVVGDSQCGRTALLHVFAKDCFPENYVPTVFENYTASFEIDTQRIELSLWDTSGSPYYDNVRPLSYPDSDAVLICFDISRPETLDSVLKKWKGEIQEFCPNTKMLLVGCKSDLRTDVSTLVELSNHRQTPVSYDQGANMAKQIGAATYIECSALQSENSVRDIFHVATLACVNKTNKNVKRNKSQRATKRISHMPSRPELSAVATDLRKDKAKSCTVM.

30 to 37 (GDSQCGRT) is a binding site for GTP. The short motif at 52 to 60 (YVPTVFENY) is the Effector region element. Residues 77–81 (DTSGS) and 135–138 (CKSD) each bind GTP. A Cysteine methyl ester modification is found at cysteine 241. Cysteine 241 carries S-farnesyl cysteine lipidation. Residues 242-244 (TVM) constitute a propeptide, removed in mature form.

The protein belongs to the small GTPase superfamily. Rho family. In terms of assembly, binds ROCK1. Interacts with UBXD5.

Its subcellular location is the cell membrane. Binds GTP but lacks intrinsic GTPase activity and is resistant to Rho-specific GTPase-activating proteins. The polypeptide is Rho-related GTP-binding protein RhoE (RND3) (Sus scrofa (Pig)).